The sequence spans 542 residues: Calcium-dependent protein kinase 15 (542 aa).

Positions 1 to 73 (MGARASRHRQ…QAPQQAAAED (73 aa)) are disordered. Gly2 is lipidated: N-myristoyl glycine. Positions 12–21 (PDQSQSQSPS) are enriched in low complexity. Over residues 22 to 40 (PHHKHHHHHQTTRAPKPKP) the composition is skewed to basic residues. Residues 41 to 60 (KPQPPPPQQPRSQPPPPPRH) are compositionally biased toward pro residues. The span at 61 to 71 (QPQQAPQQAAA) shows a compositional bias: low complexity. Positions 90–348 (YTFGRELGRG…AAEILNHPWI (259 aa)) constitute a Protein kinase domain. Residues 96–104 (LGRGQFGVT) and Lys119 contribute to the ATP site. The active-site Proton acceptor is Asp214. The autoinhibitory domain stretch occupies residues 354–384 (APDKPLDITVISRMKQFRAMNKLKKVALKVV). 4 consecutive EF-hand domains span residues 391-426 (EEIVGLKEMFKSLDTDNSGTITLEELRAGLPKLGTK), 427-462 (ISESELRQLMEAADVDGNGSIDYVEFISATMHMNRL), 463-497 (EKEDHIYKAFEYFDKDHSGFITVDELEEALTKYDM), and 498-533 (GDEATIKEIIAEVDTDHDGRINYQEFVAMMKNNSPE). Positions 404, 406, 408, 410, 415, 440, 442, 444, 446, 451, 476, 478, 480, 487, 511, 513, 515, 517, and 522 each coordinate Ca(2+).

The protein belongs to the protein kinase superfamily. Ser/Thr protein kinase family. CDPK subfamily.

The protein resides in the membrane. It carries out the reaction L-seryl-[protein] + ATP = O-phospho-L-seryl-[protein] + ADP + H(+). The enzyme catalyses L-threonyl-[protein] + ATP = O-phospho-L-threonyl-[protein] + ADP + H(+). With respect to regulation, activated by calcium. Autophosphorylation may play an important role in the regulation of the kinase activity. Functionally, may play a role in signal transduction pathways that involve calcium as a second messenger. The chain is Calcium-dependent protein kinase 15 from Oryza sativa subsp. japonica (Rice).